The sequence spans 102 residues: MTLTLAHYLILGAILFAIGIFGIFLNRRNLIILLMSIELVLLAVNMNFVAFSSWFGDIAGQVFVFFILTVAAAEAAIGLAILVLLFRNLNTINVDELDRLKG.

A run of 3 helical transmembrane segments spans residues 5-25, 31-51, and 62-82; these read LAHYLILGAILFAIGIFGIFL, IILLMSIELVLLAVNMNFVAF, and VFVFFILTVAAAEAAIGLAIL.

Belongs to the complex I subunit 4L family. In terms of assembly, NDH-1 is composed of 14 different subunits. Subunits NuoA, H, J, K, L, M, N constitute the membrane sector of the complex.

It localises to the cell inner membrane. It carries out the reaction a quinone + NADH + 5 H(+)(in) = a quinol + NAD(+) + 4 H(+)(out). Functionally, NDH-1 shuttles electrons from NADH, via FMN and iron-sulfur (Fe-S) centers, to quinones in the respiratory chain. The immediate electron acceptor for the enzyme in this species is believed to be ubiquinone. Couples the redox reaction to proton translocation (for every two electrons transferred, four hydrogen ions are translocated across the cytoplasmic membrane), and thus conserves the redox energy in a proton gradient. The polypeptide is NADH-quinone oxidoreductase subunit K (Bordetella parapertussis (strain 12822 / ATCC BAA-587 / NCTC 13253)).